Reading from the N-terminus, the 276-residue chain is Pirin-like protein CC_0481 (276 aa).

The protein belongs to the pirin family.

The chain is Pirin-like protein CC_0481 from Caulobacter vibrioides (strain ATCC 19089 / CIP 103742 / CB 15) (Caulobacter crescentus).